The following is a 169-amino-acid chain: Endoribonuclease YbeY (169 aa).

Histidine 117, histidine 121, and histidine 127 together coordinate Zn(2+).

It belongs to the endoribonuclease YbeY family. The cofactor is Zn(2+).

Its subcellular location is the cytoplasm. Functionally, single strand-specific metallo-endoribonuclease involved in late-stage 70S ribosome quality control and in maturation of the 3' terminus of the 16S rRNA. This chain is Endoribonuclease YbeY, found in Mesoplasma florum (strain ATCC 33453 / NBRC 100688 / NCTC 11704 / L1) (Acholeplasma florum).